A 114-amino-acid polypeptide reads, in one-letter code: Large ribosomal subunit protein bL17 (114 aa).

Belongs to the bacterial ribosomal protein bL17 family. In terms of assembly, part of the 50S ribosomal subunit. Contacts protein L32.

This Halothermothrix orenii (strain H 168 / OCM 544 / DSM 9562) protein is Large ribosomal subunit protein bL17.